The chain runs to 253 residues: NAD-dependent protein deacylase 2 (253 aa).

The region spanning 1-252 (MEDEIRKAAE…VEEVKRLRSE (252 aa)) is the Deacetylase sirtuin-type domain. NAD(+) is bound by residues 23 to 42 (GAGISAESGIPTFRGEDGLW) and 100 to 103 (QNID). The active-site Proton acceptor is His-118. The Zn(2+) site is built by Cys-126, Cys-129, Cys-150, and Cys-153. Residues 191–193 (GSS), 217–219 (NAE), and Ala-235 contribute to the NAD(+) site.

This sequence belongs to the sirtuin family. Class III subfamily. Zn(2+) serves as cofactor.

It localises to the cytoplasm. It catalyses the reaction N(6)-acetyl-L-lysyl-[protein] + NAD(+) + H2O = 2''-O-acetyl-ADP-D-ribose + nicotinamide + L-lysyl-[protein]. Functionally, NAD-dependent protein deacetylase which modulates the activities of several proteins which are inactive in their acetylated form. Deacetylates the N-terminal lysine residue of Alba, the major archaeal chromatin protein and that, in turn, increases Alba's DNA binding affinity, thereby repressing transcription. This Archaeoglobus fulgidus (strain ATCC 49558 / DSM 4304 / JCM 9628 / NBRC 100126 / VC-16) protein is NAD-dependent protein deacylase 2.